Here is a 292-residue protein sequence, read N- to C-terminus: Small ribosomal subunit biogenesis GTPase RsgA (292 aa).

One can recognise a CP-type G domain in the interval 64-221 (RSELFRPAVA…LVDTPGFSSL (158 aa)). GTP is bound by residues 113 to 116 (NKMD) and 164 to 172 (GPSGVGKST). Zn(2+) contacts are provided by Cys245, Cys250, His252, and Cys258.

The protein belongs to the TRAFAC class YlqF/YawG GTPase family. RsgA subfamily. Monomer. Associates with 30S ribosomal subunit, binds 16S rRNA. The cofactor is Zn(2+).

The protein resides in the cytoplasm. In terms of biological role, one of several proteins that assist in the late maturation steps of the functional core of the 30S ribosomal subunit. Helps release RbfA from mature subunits. May play a role in the assembly of ribosomal proteins into the subunit. Circularly permuted GTPase that catalyzes slow GTP hydrolysis, GTPase activity is stimulated by the 30S ribosomal subunit. The protein is Small ribosomal subunit biogenesis GTPase RsgA of Clostridium botulinum (strain 657 / Type Ba4).